The primary structure comprises 75 residues: MDIITLAEVAGNLSVIGYGIGTLGPGIGLGILFGKAMESTARQPEMSGKIQTIMFIGLALVEVLALIGFVAALII.

A run of 2 helical transmembrane segments spans residues 13–33 (LSVIGYGIGTLGPGIGLGILF) and 55–75 (FIGLALVEVLALIGFVAALII).

It belongs to the ATPase C chain family. F-type ATPases have 2 components, F(1) - the catalytic core - and F(0) - the membrane proton channel. F(1) has five subunits: alpha(3), beta(3), gamma(1), delta(1), epsilon(1). F(0) has three main subunits: a(1), b(2) and c(10-14). The alpha and beta chains form an alternating ring which encloses part of the gamma chain. F(1) is attached to F(0) by a central stalk formed by the gamma and epsilon chains, while a peripheral stalk is formed by the delta and b chains.

It is found in the cell membrane. Functionally, f(1)F(0) ATP synthase produces ATP from ADP in the presence of a proton or sodium gradient. F-type ATPases consist of two structural domains, F(1) containing the extramembraneous catalytic core and F(0) containing the membrane proton channel, linked together by a central stalk and a peripheral stalk. During catalysis, ATP synthesis in the catalytic domain of F(1) is coupled via a rotary mechanism of the central stalk subunits to proton translocation. Its function is as follows. Key component of the F(0) channel; it plays a direct role in translocation across the membrane. A homomeric c-ring of between 10-14 subunits forms the central stalk rotor element with the F(1) delta and epsilon subunits. This Bifidobacterium longum (strain DJO10A) protein is ATP synthase subunit c.